The sequence spans 300 residues: Iron-dependent extradiol dioxygenase (300 aa).

2 VOC domains span residues 5 to 120 (SLGY…VFHG) and 142 to 270 (GMGH…FGCE). Fe cation is bound at residue H145. Substrate contacts are provided by H200, H215, D250, and Y256. H215 provides a ligand contact to Fe cation. E266 serves as a coordination point for Fe cation.

It belongs to the extradiol ring-cleavage dioxygenase family. Homodimer, but may form a homooctamer. It depends on Fe(2+) as a cofactor.

It carries out the reaction 3,4-dihydroxy-9,10-secoandrosta-1,3,5(10)-triene-9,17-dione + O2 = (1E,2Z)-3-hydroxy-5,9,17-trioxo-4,5:9,10-disecoandrosta-1(10),2-dien-4-oate + H(+). It functions in the pathway steroid metabolism; cholesterol metabolism. In terms of biological role, catalyzes the meta-cleavage of 3,4-dihydroxy-9,10-seconandrost-1,3,5(10)-triene-9,17-dione (3,4-DHSA) to produce 4,5-9,10-diseco-3-hydroxy-5,9,17-trioxoandrosta-1(10),2-diene-4-oic acid (4,9-DSHA). This chain is Iron-dependent extradiol dioxygenase (hsaC), found in Mycobacterium tuberculosis (strain CDC 1551 / Oshkosh).